A 317-amino-acid polypeptide reads, in one-letter code: Zinc finger protein 771 (317 aa).

Positions 1–17 are enriched in acidic residues; the sequence is MPGEQQAEEEEEEEMQE. The disordered stretch occupies residues 1-63; sequence MPGEQQAEEE…APSADPARPH (63 aa). Residue Lys-33 forms a Glycyl lysine isopeptide (Lys-Gly) (interchain with G-Cter in SUMO2) linkage. Over residues 33 to 49 the composition is skewed to basic and acidic residues; sequence KYEVVKLKIPMDNKEVP. 8 C2H2-type zinc fingers span residues 63-85, 91-113, 119-141, 147-169, 175-197, 203-225, 231-253, and 259-281; these read HACP…ARTH, FGCT…GRTH, YECP…RRRH, YACA…LRVH, YACP…RRTH, YACA…RRVH, HRCA…ARTH, and YPCA…RRAH.

Belongs to the krueppel C2H2-type zinc-finger protein family.

The protein resides in the nucleus. Its function is as follows. May be involved in transcriptional regulation. The chain is Zinc finger protein 771 (ZNF771) from Homo sapiens (Human).